Reading from the N-terminus, the 316-residue chain is Porphobilinogen deaminase (316 aa).

Residue cysteine 245 is modified to S-(dipyrrolylmethanemethyl)cysteine.

Belongs to the HMBS family. Monomer. It depends on dipyrromethane as a cofactor.

It carries out the reaction 4 porphobilinogen + H2O = hydroxymethylbilane + 4 NH4(+). Its pathway is porphyrin-containing compound metabolism; protoporphyrin-IX biosynthesis; coproporphyrinogen-III from 5-aminolevulinate: step 2/4. It functions in the pathway porphyrin-containing compound metabolism; chlorophyll biosynthesis. Tetrapolymerization of the monopyrrole PBG into the hydroxymethylbilane pre-uroporphyrinogen in several discrete steps. The chain is Porphobilinogen deaminase from Prochlorococcus marinus (strain MIT 9312).